The following is a 72-amino-acid chain: UPF0270 protein YheU (72 aa).

The protein belongs to the UPF0270 family.

This chain is UPF0270 protein YheU, found in Shigella dysenteriae serotype 1 (strain Sd197).